The sequence spans 259 residues: uncharacterized protein (259 aa).

The signal sequence occupies residues 1–28 (MNIKRRLKYLTSCLLVSAFFWINSSAWA). Transmembrane regions (helical) follow at residues 32–52 (EIPP…IYVA) and 191–211 (WGFL…GIFT).

Its subcellular location is the cell membrane. This is an uncharacterized protein from Coxiella burnetii (strain RSA 493 / Nine Mile phase I).